We begin with the raw amino-acid sequence, 518 residues long: Flagellin (518 aa).

Belongs to the bacterial flagellin family.

It is found in the secreted. Its subcellular location is the bacterial flagellum. In terms of biological role, flagellin is the subunit protein which polymerizes to form the filaments of bacterial flagella. In Aquifex aeolicus (strain VF5), this protein is Flagellin (flaA).